The sequence spans 346 residues: Ribosomal RNA small subunit methyltransferase H (346 aa).

Residues Gly47–Tyr49, Asp65, Phe92, Asp113, and Gln120 each bind S-adenosyl-L-methionine. The segment at Ala294–Ser346 is disordered. Positions Arg314–Gly327 are enriched in basic and acidic residues. A compositionally biased stretch (low complexity) spans Asp328–Leu337.

The protein belongs to the methyltransferase superfamily. RsmH family.

It localises to the cytoplasm. It catalyses the reaction cytidine(1402) in 16S rRNA + S-adenosyl-L-methionine = N(4)-methylcytidine(1402) in 16S rRNA + S-adenosyl-L-homocysteine + H(+). Specifically methylates the N4 position of cytidine in position 1402 (C1402) of 16S rRNA. The polypeptide is Ribosomal RNA small subunit methyltransferase H (Azorhizobium caulinodans (strain ATCC 43989 / DSM 5975 / JCM 20966 / LMG 6465 / NBRC 14845 / NCIMB 13405 / ORS 571)).